The following is a 130-amino-acid chain: Peptidyl-prolyl cis-trans isomerase pin4 (130 aa).

The disordered stretch occupies residues 1–38 (MGKDKKASGSGSGSKGGKDAGNKDAGKDAGKASKGAQS). Positions 16–31 (GGKDAGNKDAGKDAGK) are enriched in basic and acidic residues. The 93-residue stretch at 36–128 (AQSINVRHIL…FGYHIIMVEG (93 aa)) folds into the PpiC domain.

Belongs to the PpiC/parvulin rotamase family. PIN4 subfamily.

The enzyme catalyses [protein]-peptidylproline (omega=180) = [protein]-peptidylproline (omega=0). In terms of biological role, PPIases accelerate the folding of proteins. It catalyzes the cis-trans isomerization of proline imidic peptide bonds in oligopeptides. This Neurospora crassa (strain ATCC 24698 / 74-OR23-1A / CBS 708.71 / DSM 1257 / FGSC 987) protein is Peptidyl-prolyl cis-trans isomerase pin4 (ppi-5).